Reading from the N-terminus, the 169-residue chain is uncharacterized protein (169 aa).

3 consecutive transmembrane segments (helical) span residues 25 to 45 (ALMG…MSYF), 57 to 77 (FFWV…FGVF), and 91 to 111 (LFLI…FLMV).

Belongs to the major facilitator superfamily. Allantoate permease family.

The protein resides in the membrane. This is an uncharacterized protein from Saccharomyces cerevisiae (strain ATCC 204508 / S288c) (Baker's yeast).